The sequence spans 601 residues: UBA domain-containing protein 3 (601 aa).

Positions Glu7 to Asn129 constitute an Arf-GAP domain. 2 disordered regions span residues Asp123–Tyr158 and Glu289–Gly310. Residues Thr139–Ser156 show a composition bias toward low complexity. In terms of domain architecture, UBA spans Arg157–His197.

This is UBA domain-containing protein 3 (ucp3) from Schizosaccharomyces pombe (strain 972 / ATCC 24843) (Fission yeast).